We begin with the raw amino-acid sequence, 198 residues long: Recombination protein RecR (198 aa).

Residues cysteine 57–cysteine 72 form a C4-type zinc finger. In terms of domain architecture, Toprim spans arginine 80–proline 175.

This sequence belongs to the RecR family.

In terms of biological role, may play a role in DNA repair. It seems to be involved in an RecBC-independent recombinational process of DNA repair. It may act with RecF and RecO. The chain is Recombination protein RecR from Anaeromyxobacter dehalogenans (strain 2CP-C).